The following is a 490-amino-acid chain: UDP-glycosyltransferase 73C7 (490 aa).

Residues S291, 351-353 (APQ), 368-376 (HCGWNSTLE), and 390-393 (FAEQ) contribute to the UDP-alpha-D-glucose site.

This sequence belongs to the UDP-glycosyltransferase family.

The chain is UDP-glycosyltransferase 73C7 (UGT73C7) from Arabidopsis thaliana (Mouse-ear cress).